Consider the following 304-residue polypeptide: MPPLIALSPETSQALADRQPLVALESTIITHGMPYPQNLEVAQQVEAAVREEGAVPATIAVMGGRIRVGLDAEALEALASTPAEQVMKLSRADLAACLALGRTGATTVAATMICAHLAGIEVFATGGIGGVHRGAETSFDISADLQELAQSPVTVVAAGAKAILDLPKTLEVLETLGVPVIAFGQDQLPAFWSRESGLAAPLRMDDPAQIAASARLRRELGLSGGQLVVNPIPPEAEIPRAEMIPVVEQALSEAEAQGIAAKAVTPFLLQRIFELTQGRSLDANIALVLNNARLAARIAAAMAT.

Catalysis depends on E25, which acts as the Proton donor. 2 residues coordinate substrate: K88 and V108. D140 serves as a coordination point for Mn(2+). 142-144 contributes to the substrate binding site; that stretch reads SAD. K161 acts as the Nucleophile in catalysis.

It belongs to the pseudouridine-5'-phosphate glycosidase family. Homotrimer. Mn(2+) is required as a cofactor.

The enzyme catalyses D-ribose 5-phosphate + uracil = psi-UMP + H2O. Catalyzes the reversible cleavage of pseudouridine 5'-phosphate (PsiMP) to ribose 5-phosphate and uracil. Functions biologically in the cleavage direction, as part of a pseudouridine degradation pathway. This Paracoccus denitrificans (strain Pd 1222) protein is Pseudouridine-5'-phosphate glycosidase.